A 505-amino-acid polypeptide reads, in one-letter code: Protein MGF 505-4R (505 aa).

It belongs to the asfivirus MGF 505 family.

Functionally, plays a role in virus cell tropism, and may be required for efficient virus replication in macrophages. This Ornithodoros (relapsing fever ticks) protein is Protein MGF 505-4R.